The primary structure comprises 213 residues: Flagellar transcriptional regulator FlhC (213 aa).

The Zn(2+) site is built by Cys-138, Cys-141, Cys-158, and Cys-161.

The protein belongs to the FlhC family. As to quaternary structure, heterohexamer composed of two FlhC and four FlhD subunits. Each FlhC binds a FlhD dimer, forming a heterotrimer, and a hexamer assembles by dimerization of two heterotrimers. Zn(2+) serves as cofactor.

It is found in the cytoplasm. Functions in complex with FlhD as a master transcriptional regulator that regulates transcription of several flagellar and non-flagellar operons by binding to their promoter region. Activates expression of class 2 flagellar genes, including fliA, which is a flagellum-specific sigma factor that turns on the class 3 genes. Also regulates genes whose products function in a variety of physiological pathways. This chain is Flagellar transcriptional regulator FlhC, found in Cupriavidus metallidurans (strain ATCC 43123 / DSM 2839 / NBRC 102507 / CH34) (Ralstonia metallidurans).